A 729-amino-acid polypeptide reads, in one-letter code: Solute carrier family 15 member 2 (729 aa).

Positions 1–34 are disordered; it reads MNPFQQNESKETLFSPVSTEETPPRLSSPAKKTP. The Cytoplasmic portion of the chain corresponds to 1 to 57; it reads MNPFQQNESKETLFSPVSTEETPPRLSSPAKKTPPKICGSNYPLSIAFIVVNEFCER. Ser-9 is modified (phosphoserine). The residue at position 12 (Thr-12) is a Phosphothreonine. Ser-28 bears the Phosphoserine mark. A helical transmembrane segment spans residues 58–78; it reads FSYYGMKAVLTLYFLYFLHWN. Residues 79 to 87 lie on the Extracellular side of the membrane; that stretch reads EDTSTSVYH. A helical membrane pass occupies residues 88-108; the sequence is AFSSLCYFTPILGAAIADSWL. Topologically, residues 109-113 are cytoplasmic; the sequence is GKFKT. The chain crosses the membrane as a helical span at residues 114 to 134; the sequence is IIYLSLVNVLGHVIKSLSAFP. At 135–139 the chain is on the extracellular side; it reads ILGGK. The chain crosses the membrane as a helical span at residues 140–160; sequence VVHTVLSLVGLCLIALGTGGI. Residues 161-183 lie on the Cytoplasmic side of the membrane; sequence KPCVAAFGGDQFEEKHAEERTRY. A helical membrane pass occupies residues 184–204; that stretch reads FSGFYLAINAGSLISTFITPM. Residues 205 to 217 lie on the Extracellular side of the membrane; it reads LRGDVQCFGEDCY. Residues 218–238 traverse the membrane as a helical segment; it reads ALAFGVPGLLMVIALVVFAMG. Over 239–295 the chain is Cytoplasmic; that stretch reads SKMYKKPPPEGNIVAQVVKCIWFAISNRFKNRSEDIPKRQHWLDWAAEKYPKQLIMD. The chain crosses the membrane as a helical span at residues 296 to 316; the sequence is VKTLTRVLFLYIPLPMFWALL. Over 317-343 the chain is Extracellular; sequence DQQGSRWTLQATKMNGNLGFFVLQPDQ. A helical transmembrane segment spans residues 344 to 364; that stretch reads MQVLNPLLVLIFIPLFDLVIY. At 365 to 380 the chain is on the cytoplasmic side; sequence RLISKCGINFTSLRKM. A helical membrane pass occupies residues 381 to 401; that stretch reads AVGMVLACLAFAAAATVEIKI. The Extracellular portion of the chain corresponds to 402 to 611; it reads NEMAPPQPGS…PANKVSIAWQ (210 aa). Residues 402-611 are extracellular domain (ECD); that stretch reads NEMAPPQPGS…PANKVSIAWQ (210 aa). N-linked (GlcNAc...) asparagine glycosylation is found at Asn-435, Asn-472, Asn-508, Asn-528, and Asn-587. A helical membrane pass occupies residues 612–632; it reads LPQYALVTAGEVMFSVTGLEF. Residues 633 to 643 lie on the Cytoplasmic side of the membrane; that stretch reads SYSQAPSSMKS. Residues 644–664 form a helical membrane-spanning segment; the sequence is VLQAAWLLTVAIGNIIVLVVA. The Extracellular portion of the chain corresponds to 665–674; it reads QFSGLVQWAE. A helical transmembrane segment spans residues 675 to 695; sequence FVLFSCLLLVVCLIFSIMGYY. Topologically, residues 696–729 are cytoplasmic; sequence YIPIKSEDIQGPEDKQIPHMQGNMINLETKKTKL.

It belongs to the major facilitator superfamily. Proton-dependent oligopeptide transporter (POT/PTR) (TC 2.A.17) family. In terms of assembly, interacts (via extracellular domain region) with trypsin. In terms of tissue distribution, strongly expressed in kidney. Also detected in brain, lung, liver and heart.

The protein localises to the apical cell membrane. The protein resides in the cytoplasmic vesicle. It is found in the phagosome membrane. Its subcellular location is the cell membrane. It carries out the reaction a dipeptide(out) + 2 H(+)(out) = a dipeptide(in) + 2 H(+)(in). The enzyme catalyses N-acetyl-D-muramoyl-L-alanyl-D-isoglutamine(out) + 3 H(+)(out) = N-acetyl-D-muramoyl-L-alanyl-D-isoglutamine(in) + 3 H(+)(in). The catalysed reaction is glycyl-L-leucine(out) + 2 H(+)(out) = glycyl-L-leucine(in) + 2 H(+)(in). It catalyses the reaction glycyl-L-lysine(out) + 2 H(+)(out) = glycyl-L-lysine(in) + 2 H(+)(in). It carries out the reaction glycyl-L-glutamate(out) + 3 H(+)(out) = glycyl-L-glutamate(in) + 3 H(+)(in). The enzyme catalyses L-alanyl-L-alanine(out) + 2 H(+)(out) = L-alanyl-L-alanine(in) + 2 H(+)(in). The catalysed reaction is an L-amino acid tripeptide(out) + 2 H(+)(out) = an L-amino acid tripeptide(in) + 2 H(+)(in). It catalyses the reaction carnosine(out) + 2 H(+)(out) = carnosine(in) + 2 H(+)(in). In terms of biological role, proton-coupled amino-acid transporter that transports oligopeptides of 2 to 4 amino acids with a preference for dipeptides. Transports neutral and anionic dipeptides with a proton to peptide stoichiometry of 2:1 or 3:1. In kidney, involved in the absorption of circulating di- and tripeptides from the glomerular filtrate. Can also transport beta-lactam antibiotics, such as the aminocephalosporin cefadroxil, and other antiviral and anticancer drugs. Transports the dipeptide-like aminopeptidase inhibitor bestatin. Also able to transport carnosine. Involved in innate immunity by promoting the detection of microbial pathogens by NOD-like receptors (NLRs). Mediates transport of bacterial peptidoglycans across the plasma membrane or, in macrophages, the phagosome membrane: catalyzes the transport of certain bacterial peptidoglycans, such as muramyl dipeptide (MDP), the NOD2 ligand. The chain is Solute carrier family 15 member 2 from Oryctolagus cuniculus (Rabbit).